A 156-amino-acid chain; its full sequence is Large ribosomal subunit protein uL15 (156 aa).

The span at 1–16 (MVRRFKRAVKYRRGSR) shows a compositional bias: basic residues. Residues 1–35 (MVRRFKRAVKYRRGSRTHGWGRVGQHRKSGGSGGK) are disordered.

The protein belongs to the universal ribosomal protein uL15 family. In terms of assembly, part of the 50S ribosomal subunit.

Its function is as follows. Binds to the 23S rRNA. The chain is Large ribosomal subunit protein uL15 from Pyrobaculum neutrophilum (strain DSM 2338 / JCM 9278 / NBRC 100436 / V24Sta) (Thermoproteus neutrophilus).